The primary structure comprises 406 residues: Kelch domain-containing protein 2 (406 aa).

6 Kelch repeats span residues 31–85 (ERSG…NTEG), 92–136 (SGSC…ERID), 148–207 (LGVW…AWSQ), 221–259 (HACATVGNKGFVFGGRYRDARMNDLHYLNLDTWEWNELI), 271–311 (HSLT…IQFN), and 322–359 (HTACASDEGEVIVFGGCANNLLVHHRAAHSNEVLIFSV).

In terms of assembly, component of a CRL2(KLHDC2) E3 ubiquitin-protein ligase complex, also named ECS(KLHDC2) complex, composed of CUL2, Elongin BC (ELOB and ELOC), RBX1 and substrate-specific adapter KLHDC2. May form oligomers as a KLHDC2-ELOB-ELOC complex; this interaction is autoinhibitory for the E3 ligase complex as the substrate-binding site of KLHDC2 is blocked in the oligomer. Interacts with CREB3; interaction is direct and specific as it does not interact with CREB1, ATF4, ATF6, JUN, FOS, CEBPA or herpes simplex virus transactivator VP16. Autoubiquitinated by the CRL2(KLHDC2) E3 ligase complex.

Its subcellular location is the nucleus. The protein operates within protein modification; protein ubiquitination. Its function is as follows. Substrate-recognition component of a Cul2-RING (CRL2) E3 ubiquitin-protein ligase complex of the DesCEND (destruction via C-end degrons) pathway, which recognizes a C-degron located at the extreme C terminus of target proteins, leading to their ubiquitination and degradation. The C-degron recognized by the DesCEND pathway is usually a motif of less than ten residues and can be present in full-length proteins, truncated proteins or proteolytically cleaved forms. The CRL2(KLHDC2) complex specifically recognizes proteins with a diglycine (Gly-Gly) at the C-terminus, leading to their ubiquitination and degradation. The CRL2(KLHDC2) complex mediates ubiquitination and degradation of truncated SELENOK and SELENOS selenoproteins produced by failed UGA/Sec decoding, which end with a diglycine. The CRL2(KLHDC2) complex also recognizes proteolytically cleaved proteins ending with Gly-Gly, such as the N-terminal fragment of USP1, leading to their degradation. May also act as an indirect repressor of CREB3-mediated transcription by interfering with CREB3-DNA-binding. The sequence is that of Kelch domain-containing protein 2 from Mus musculus (Mouse).